Here is a 477-residue protein sequence, read N- to C-terminus: 3-isopropylmalate dehydratase large subunit (477 aa).

[4Fe-4S] cluster contacts are provided by C347, C407, and C410. The interval 418–442 is disordered; it reads LAPGERSASTSNRNFEGRQGKGGRT.

This sequence belongs to the aconitase/IPM isomerase family. LeuC type 1 subfamily. Heterodimer of LeuC and LeuD. [4Fe-4S] cluster is required as a cofactor.

The catalysed reaction is (2R,3S)-3-isopropylmalate = (2S)-2-isopropylmalate. It functions in the pathway amino-acid biosynthesis; L-leucine biosynthesis; L-leucine from 3-methyl-2-oxobutanoate: step 2/4. Catalyzes the isomerization between 2-isopropylmalate and 3-isopropylmalate, via the formation of 2-isopropylmaleate. The chain is 3-isopropylmalate dehydratase large subunit from Streptomyces avermitilis (strain ATCC 31267 / DSM 46492 / JCM 5070 / NBRC 14893 / NCIMB 12804 / NRRL 8165 / MA-4680).